Here is a 261-residue protein sequence, read N- to C-terminus: 5'-nucleotidase SurE (261 aa).

A divalent metal cation-binding residues include D8, D9, S43, and N96.

It belongs to the SurE nucleotidase family. A divalent metal cation is required as a cofactor.

The protein localises to the cytoplasm. The catalysed reaction is a ribonucleoside 5'-phosphate + H2O = a ribonucleoside + phosphate. Its function is as follows. Nucleotidase that shows phosphatase activity on nucleoside 5'-monophosphates. The protein is 5'-nucleotidase SurE of Cereibacter sphaeroides (strain ATCC 17029 / ATH 2.4.9) (Rhodobacter sphaeroides).